The following is a 544-amino-acid chain: Protein RDR1 (544 aa).

Residues 14 to 40 (CETCRELKRKCDGNQPCGACVRFEYDC) constitute a DNA-binding region (zn(2)-C6 fungal-type). Positions 50–71 (KRRKTVEQDKEAPLPSPPVHVD) are disordered.

It localises to the nucleus. Its function is as follows. May act as a transcriptional repressor of multidrug resistance genes. The protein is Protein RDR1 (RDR1) of Gibberella zeae (strain ATCC MYA-4620 / CBS 123657 / FGSC 9075 / NRRL 31084 / PH-1) (Wheat head blight fungus).